A 361-amino-acid chain; its full sequence is Mannose-1-phosphate guanyltransferase (361 aa).

This sequence belongs to the transferase hexapeptide repeat family.

It localises to the cytoplasm. The catalysed reaction is alpha-D-mannose 1-phosphate + GTP + H(+) = GDP-alpha-D-mannose + diphosphate. It participates in nucleotide-sugar biosynthesis; GDP-alpha-D-mannose biosynthesis; GDP-alpha-D-mannose from alpha-D-mannose 1-phosphate (GTP route): step 1/1. Involved in cell wall synthesis where it is required for glycosylation. Involved in cell cycle progression through cell-size checkpoint. The sequence is that of Mannose-1-phosphate guanyltransferase (MPG1) from Kluyveromyces lactis (strain ATCC 8585 / CBS 2359 / DSM 70799 / NBRC 1267 / NRRL Y-1140 / WM37) (Yeast).